We begin with the raw amino-acid sequence, 480 residues long: Bifunctional protein GlmU (480 aa).

The segment at 1–247 is pyrophosphorylase; that stretch reads MATPIDVVIM…AAQVAGVNSP (247 aa). UDP-N-acetyl-alpha-D-glucosamine contacts are provided by residues Lys24, Gln86, 91–92, 113–115, Gly150, Glu172, and Asn245; these read GT and SGD. Residue Asp115 participates in Mg(2+) binding. Asn245 lines the Mg(2+) pocket. The tract at residues 248 to 268 is linker; it reads VQLAELERVYQLRQATALMEQ. The N-acetyltransferase stretch occupies residues 269 to 480; the sequence is GVRLADPARF…WKRPVKVSKG (212 aa). Residues Arg355 and Lys373 each coordinate UDP-N-acetyl-alpha-D-glucosamine. Residue His385 is the Proton acceptor of the active site. 2 residues coordinate UDP-N-acetyl-alpha-D-glucosamine: Tyr388 and Asn399. Acetyl-CoA-binding positions include Ala402, 408–409, Ser427, Gly445, and Arg462; that span reads NY.

This sequence in the N-terminal section; belongs to the N-acetylglucosamine-1-phosphate uridyltransferase family. It in the C-terminal section; belongs to the transferase hexapeptide repeat family. As to quaternary structure, homotrimer. Requires Mg(2+) as cofactor.

The protein resides in the cytoplasm. It carries out the reaction alpha-D-glucosamine 1-phosphate + acetyl-CoA = N-acetyl-alpha-D-glucosamine 1-phosphate + CoA + H(+). It catalyses the reaction N-acetyl-alpha-D-glucosamine 1-phosphate + UTP + H(+) = UDP-N-acetyl-alpha-D-glucosamine + diphosphate. The protein operates within nucleotide-sugar biosynthesis; UDP-N-acetyl-alpha-D-glucosamine biosynthesis; N-acetyl-alpha-D-glucosamine 1-phosphate from alpha-D-glucosamine 6-phosphate (route II): step 2/2. Its pathway is nucleotide-sugar biosynthesis; UDP-N-acetyl-alpha-D-glucosamine biosynthesis; UDP-N-acetyl-alpha-D-glucosamine from N-acetyl-alpha-D-glucosamine 1-phosphate: step 1/1. It functions in the pathway bacterial outer membrane biogenesis; LPS lipid A biosynthesis. Functionally, catalyzes the last two sequential reactions in the de novo biosynthetic pathway for UDP-N-acetylglucosamine (UDP-GlcNAc). The C-terminal domain catalyzes the transfer of acetyl group from acetyl coenzyme A to glucosamine-1-phosphate (GlcN-1-P) to produce N-acetylglucosamine-1-phosphate (GlcNAc-1-P), which is converted into UDP-GlcNAc by the transfer of uridine 5-monophosphate (from uridine 5-triphosphate), a reaction catalyzed by the N-terminal domain. The chain is Bifunctional protein GlmU from Polaromonas sp. (strain JS666 / ATCC BAA-500).